A 2145-amino-acid polypeptide reads, in one-letter code: Adenylate cyclase (2145 aa).

Disordered regions lie at residues Met-1 to Asp-115, Asp-127 to Arg-236, Gly-266 to Lys-307, and Val-329 to Asp-547. Composition is skewed to low complexity over residues Ser-7–Ser-23, Pro-35–Arg-68, and Ser-89–Ser-107. Composition is skewed to polar residues over residues Ser-134 to Gln-148 and Pro-159 to Pro-205. A compositionally biased stretch (low complexity) spans Ser-217 to Gly-234. A compositionally biased stretch (basic residues) spans His-269–Arg-281. The segment covering Asn-343 to Ser-357 has biased composition (polar residues). Positions Lys-377 to Asn-403 are enriched in basic and acidic residues. Positions Gly-404 to Gly-441 are enriched in polar residues. 2 stretches are compositionally biased toward basic and acidic residues: residues Arg-454–Lys-466 and Ala-495–Leu-511. The region spanning His-637–Ser-727 is the Ras-associating domain. 15 LRR repeats span residues Glu-779 to Val-800, Asn-803 to Ala-824, Arg-826 to Asn-847, Gly-850 to Phe-871, Val-873 to Leu-894, Asn-896 to Met-917, Ser-919 to Leu-941, Ser-943 to Pro-964, Lys-965 to Val-986, Arg-987 to Pro-1006, Thr-1007 to Met-1028, Asn-1030 to Leu-1051, Arg-1053 to Leu-1074, Glu-1076 to Ala-1097, and Lys-1099 to Ala-1120. A disordered region spans residues Pro-1114 to Gln-1226. Low complexity-rich tracts occupy residues Arg-1160 to Gly-1179 and Ser-1201 to Ser-1217. 6 LRR repeats span residues Ser-1235 to Cys-1255, Asn-1259 to Ser-1280, Gln-1283 to Glu-1304, Met-1307 to Ala-1328, Lys-1330 to Trp-1352, and Asn-1359 to Thr-1380. One can recognise a PPM-type phosphatase domain in the interval Pro-1432 to Val-1709. Residues Arg-1718 to Arg-1760 form a disordered region. In terms of domain architecture, Guanylate cyclase spans Ala-1773–Ser-1910. 2 residues coordinate Mg(2+): Asp-1778 and Asp-1821.

This sequence belongs to the adenylyl cyclase class-3 family. It depends on Mg(2+) as a cofactor.

It catalyses the reaction ATP = 3',5'-cyclic AMP + diphosphate. In terms of biological role, plays essential roles in regulation of cellular metabolism by catalyzing the synthesis of a second messenger, cAMP. This is Adenylate cyclase from Podospora anserina (Pleurage anserina).